The following is a 77-amino-acid chain: MAVKLKIKKGDNVKVVTGDDKGKTGKVLAVYPKTLKVVVEGCKIAKKAIKPSEKNPNGGFINKEMPMDISNVAKVQE.

It belongs to the universal ribosomal protein uL24 family. Part of the 50S ribosomal subunit.

In terms of biological role, one of two assembly initiator proteins, it binds directly to the 5'-end of the 23S rRNA, where it nucleates assembly of the 50S subunit. Functionally, one of the proteins that surrounds the polypeptide exit tunnel on the outside of the subunit. This is Large ribosomal subunit protein uL24 from Campylobacter jejuni subsp. doylei (strain ATCC BAA-1458 / RM4099 / 269.97).